We begin with the raw amino-acid sequence, 469 residues long: Glutamate--tRNA ligase (469 aa).

Residues 9–19 (PSPTGFLHVGG) carry the 'HIGH' region motif. 4 residues coordinate Zn(2+): cysteine 98, cysteine 100, cysteine 125, and aspartate 127. Positions 236 to 240 (KLSKR) match the 'KMSKS' region motif. Lysine 239 contacts ATP.

It belongs to the class-I aminoacyl-tRNA synthetase family. Glutamate--tRNA ligase type 1 subfamily. In terms of assembly, monomer. Requires Zn(2+) as cofactor.

The protein resides in the cytoplasm. The enzyme catalyses tRNA(Glu) + L-glutamate + ATP = L-glutamyl-tRNA(Glu) + AMP + diphosphate. In terms of biological role, catalyzes the attachment of glutamate to tRNA(Glu) in a two-step reaction: glutamate is first activated by ATP to form Glu-AMP and then transferred to the acceptor end of tRNA(Glu). This Shewanella baltica (strain OS155 / ATCC BAA-1091) protein is Glutamate--tRNA ligase.